Consider the following 451-residue polypeptide: 3-phosphoshikimate 1-carboxyvinyltransferase (451 aa).

Residues K30, S31, and R35 each contribute to the 3-phosphoshikimate site. K30 contacts phosphoenolpyruvate. Phosphoenolpyruvate-binding residues include G101 and R130. 5 residues coordinate 3-phosphoshikimate: S176, S177, Q178, D321, and K348. Position 178 (Q178) interacts with phosphoenolpyruvate. The active-site Proton acceptor is D321. Phosphoenolpyruvate-binding residues include R352 and Q422.

This sequence belongs to the EPSP synthase family. As to quaternary structure, monomer.

The protein resides in the cytoplasm. It catalyses the reaction 3-phosphoshikimate + phosphoenolpyruvate = 5-O-(1-carboxyvinyl)-3-phosphoshikimate + phosphate. Its pathway is metabolic intermediate biosynthesis; chorismate biosynthesis; chorismate from D-erythrose 4-phosphate and phosphoenolpyruvate: step 6/7. Functionally, catalyzes the transfer of the enolpyruvyl moiety of phosphoenolpyruvate (PEP) to the 5-hydroxyl of shikimate-3-phosphate (S3P) to produce enolpyruvyl shikimate-3-phosphate and inorganic phosphate. This Burkholderia pseudomallei (strain K96243) protein is 3-phosphoshikimate 1-carboxyvinyltransferase.